The sequence spans 485 residues: Aspartyl/glutamyl-tRNA(Asn/Gln) amidotransferase subunit B (485 aa).

This sequence belongs to the GatB/GatE family. GatB subfamily. Heterotrimer of A, B and C subunits.

It catalyses the reaction L-glutamyl-tRNA(Gln) + L-glutamine + ATP + H2O = L-glutaminyl-tRNA(Gln) + L-glutamate + ADP + phosphate + H(+). The enzyme catalyses L-aspartyl-tRNA(Asn) + L-glutamine + ATP + H2O = L-asparaginyl-tRNA(Asn) + L-glutamate + ADP + phosphate + 2 H(+). In terms of biological role, allows the formation of correctly charged Asn-tRNA(Asn) or Gln-tRNA(Gln) through the transamidation of misacylated Asp-tRNA(Asn) or Glu-tRNA(Gln) in organisms which lack either or both of asparaginyl-tRNA or glutaminyl-tRNA synthetases. The reaction takes place in the presence of glutamine and ATP through an activated phospho-Asp-tRNA(Asn) or phospho-Glu-tRNA(Gln). In Opitutus terrae (strain DSM 11246 / JCM 15787 / PB90-1), this protein is Aspartyl/glutamyl-tRNA(Asn/Gln) amidotransferase subunit B.